Here is a 315-residue protein sequence, read N- to C-terminus: Transaldolase (315 aa).

Catalysis depends on Lys128, which acts as the Schiff-base intermediate with substrate.

The protein belongs to the transaldolase family. Type 1 subfamily. As to quaternary structure, homodimer.

It is found in the cytoplasm. It catalyses the reaction D-sedoheptulose 7-phosphate + D-glyceraldehyde 3-phosphate = D-erythrose 4-phosphate + beta-D-fructose 6-phosphate. It participates in carbohydrate degradation; pentose phosphate pathway; D-glyceraldehyde 3-phosphate and beta-D-fructose 6-phosphate from D-ribose 5-phosphate and D-xylulose 5-phosphate (non-oxidative stage): step 2/3. Transaldolase is important for the balance of metabolites in the pentose-phosphate pathway. In Opitutus terrae (strain DSM 11246 / JCM 15787 / PB90-1), this protein is Transaldolase.